The chain runs to 370 residues: Myomodulin neuropeptides 1 (370 aa).

The first 18 residues, 1–18 (MQVYMLLPLAVFASLTYQ), serve as a signal peptide directing secretion. Positions 19–50 (GACEETAAAQTSSDASTSSASSEHAENELSRA) are excised as a propeptide. The span at 28–40 (QTSSDASTSSASS) shows a compositional bias: low complexity. Residues 28-52 (QTSSDASTSSASSEHAENELSRAKR) are disordered. 2 positions are modified to leucine amide: Leu60 and Leu69. The propeptide occupies 73–190 (GGPVEPESEE…EPEEGGLGEE (118 aa)). Residues Leu199 and Leu209 each carry the leucine amide modification. Over residues 210-226 (GKREGEEGDEMDKKQDE) the composition is skewed to basic and acidic residues. Residues 210 to 230 (GKREGEEGDEMDKKQDESLND) are disordered. A propeptide spanning residues 213–237 (EGEEGDEMDKKQDESLNDDFENDDI) is cleaved from the precursor. A leucine amide mark is found at Leu246, Leu256, Leu266, Leu276, Leu286, Leu296, Leu306, Leu316, Leu326, Leu336, and Leu346. Residues 344 to 370 (LRLGKRDDDEKEKKSLNMSRLGKRSTQ) form a disordered region. Positions 347 to 358 (GKRDDDEKEKKS) are enriched in basic and acidic residues. A propeptide spanning residues 350 to 355 (DDDEKE) is cleaved from the precursor. Leu364 bears the Leucine amide mark. A propeptide spanning residues 368–370 (STQ) is cleaved from the precursor.

In terms of tissue distribution, expressed in all ganglia of the CNS, but only in a subset of neurons including L10 in the abdominal ganglion and B16 in the buccal ganglion.

The protein resides in the secreted. Its function is as follows. Exogenous application of myomodulins potentiates ARC muscle contraction. This Aplysia californica (California sea hare) protein is Myomodulin neuropeptides 1 (MYOMOD1).